A 199-amino-acid polypeptide reads, in one-letter code: MTNTPQTPPKERANGVIVGACLAFVAGMVGMAYAAVPLYDMFCRVTGYNGTTQRVEQASDVILDEKIKVTFDANVGPGLAWDFKPVQRDIDVRIGETVQVMYRAKNLSSKPATGQATFNVTPMAAGAYFNKVQCFCFTETTLQPGEEMEMPVVFFVDPEIVKPVETKDIKTLTLSYTFYPREPSKPIAAVKDGETENRL.

At 1-12 the chain is on the cytoplasmic side; sequence MTNTPQTPPKER. The helical; Signal-anchor for type II membrane protein transmembrane segment at 13 to 35 threads the bilayer; the sequence is ANGVIVGACLAFVAGMVGMAYAA. Residues 36–199 lie on the Periplasmic side of the membrane; it reads VPLYDMFCRV…VKDGETENRL (164 aa).

The protein belongs to the COX11/CtaG family.

Its subcellular location is the cell inner membrane. Exerts its effect at some terminal stage of cytochrome c oxidase synthesis, probably by being involved in the insertion of the copper B into subunit I. This Sinorhizobium fredii (strain NBRC 101917 / NGR234) protein is Cytochrome c oxidase assembly protein CtaG.